The sequence spans 475 residues: Aspartyl/glutamyl-tRNA(Asn/Gln) amidotransferase subunit B (475 aa).

Belongs to the GatB/GatE family. GatB subfamily. Heterotrimer of A, B and C subunits.

The enzyme catalyses L-glutamyl-tRNA(Gln) + L-glutamine + ATP + H2O = L-glutaminyl-tRNA(Gln) + L-glutamate + ADP + phosphate + H(+). It carries out the reaction L-aspartyl-tRNA(Asn) + L-glutamine + ATP + H2O = L-asparaginyl-tRNA(Asn) + L-glutamate + ADP + phosphate + 2 H(+). In terms of biological role, allows the formation of correctly charged Asn-tRNA(Asn) or Gln-tRNA(Gln) through the transamidation of misacylated Asp-tRNA(Asn) or Glu-tRNA(Gln) in organisms which lack either or both of asparaginyl-tRNA or glutaminyl-tRNA synthetases. The reaction takes place in the presence of glutamine and ATP through an activated phospho-Asp-tRNA(Asn) or phospho-Glu-tRNA(Gln). The chain is Aspartyl/glutamyl-tRNA(Asn/Gln) amidotransferase subunit B from Thermoanaerobacter pseudethanolicus (strain ATCC 33223 / 39E) (Clostridium thermohydrosulfuricum).